Reading from the N-terminus, the 212-residue chain is Redox-sensing transcriptional repressor Rex (212 aa).

Residues 17–56 (LYYRIFKRFNTDGIEKASSKQIADALGIDSATVRRDFSYF) constitute a DNA-binding region (H-T-H motif). 91-96 (GCGNIG) contributes to the NAD(+) binding site.

Belongs to the transcriptional regulatory Rex family. In terms of assembly, homodimer.

It localises to the cytoplasm. In terms of biological role, modulates transcription in response to changes in cellular NADH/NAD(+) redox state. The sequence is that of Redox-sensing transcriptional repressor Rex from Streptococcus agalactiae serotype III (strain NEM316).